We begin with the raw amino-acid sequence, 557 residues long: Dihydroxy-acid dehydratase (557 aa).

Asp-78 is a Mg(2+) binding site. Cys-119 is a [2Fe-2S] cluster binding site. Positions 120 and 121 each coordinate Mg(2+). At Lys-121 the chain carries N6-carboxylysine. Cys-192 is a binding site for [2Fe-2S] cluster. Glu-442 contributes to the Mg(2+) binding site. Residue Ser-468 is the Proton acceptor of the active site.

It belongs to the IlvD/Edd family. As to quaternary structure, homodimer. The cofactor is [2Fe-2S] cluster. Mg(2+) is required as a cofactor.

The enzyme catalyses (2R)-2,3-dihydroxy-3-methylbutanoate = 3-methyl-2-oxobutanoate + H2O. It carries out the reaction (2R,3R)-2,3-dihydroxy-3-methylpentanoate = (S)-3-methyl-2-oxopentanoate + H2O. It functions in the pathway amino-acid biosynthesis; L-isoleucine biosynthesis; L-isoleucine from 2-oxobutanoate: step 3/4. It participates in amino-acid biosynthesis; L-valine biosynthesis; L-valine from pyruvate: step 3/4. Its function is as follows. Functions in the biosynthesis of branched-chain amino acids. Catalyzes the dehydration of (2R,3R)-2,3-dihydroxy-3-methylpentanoate (2,3-dihydroxy-3-methylvalerate) into 2-oxo-3-methylpentanoate (2-oxo-3-methylvalerate) and of (2R)-2,3-dihydroxy-3-methylbutanoate (2,3-dihydroxyisovalerate) into 2-oxo-3-methylbutanoate (2-oxoisovalerate), the penultimate precursor to L-isoleucine and L-valine, respectively. In Bacillus cereus (strain AH187), this protein is Dihydroxy-acid dehydratase.